A 196-amino-acid polypeptide reads, in one-letter code: Large ribosomal subunit protein eL15 (196 aa).

A disordered region spans residues Arg-159–Lys-196. Basic and acidic residues predominate over residues Lys-179 to Lys-196.

The protein belongs to the eukaryotic ribosomal protein eL15 family.

The sequence is that of Large ribosomal subunit protein eL15 from Natronomonas pharaonis (strain ATCC 35678 / DSM 2160 / CIP 103997 / JCM 8858 / NBRC 14720 / NCIMB 2260 / Gabara) (Halobacterium pharaonis).